The sequence spans 502 residues: Mannitol 2-dehydrogenase (502 aa).

An NAD(+)-binding site is contributed by 37–48; sequence IVHVGVGGFHRA.

This sequence belongs to the mannitol dehydrogenase family. Monomer.

The enzyme catalyses D-mannitol + NAD(+) = D-fructose + NADH + H(+). Functionally, catalyzes the NAD(H)-dependent interconversion of D-fructose and D-mannitol in the mannitol metabolic pathway. The sequence is that of Mannitol 2-dehydrogenase from Aspergillus terreus (strain NIH 2624 / FGSC A1156).